The chain runs to 429 residues: Multifunctional CCA protein (429 aa).

Positions 27 and 30 each coordinate ATP. The CTP site is built by G27 and R30. 2 residues coordinate Mg(2+): D40 and D42. R110, R162, and R165 together coordinate ATP. Residues R110, R162, and R165 each contribute to the CTP site. The HD domain occupies 251–352; that stretch reads TGVHTMMVVD…VRLLERCDAL (102 aa).

The protein belongs to the tRNA nucleotidyltransferase/poly(A) polymerase family. Bacterial CCA-adding enzyme type 1 subfamily. In terms of assembly, monomer. Can also form homodimers and oligomers. Mg(2+) is required as a cofactor. The cofactor is Ni(2+).

It catalyses the reaction a tRNA precursor + 2 CTP + ATP = a tRNA with a 3' CCA end + 3 diphosphate. The enzyme catalyses a tRNA with a 3' CCA end + 2 CTP + ATP = a tRNA with a 3' CCACCA end + 3 diphosphate. In terms of biological role, catalyzes the addition and repair of the essential 3'-terminal CCA sequence in tRNAs without using a nucleic acid template. Adds these three nucleotides in the order of C, C, and A to the tRNA nucleotide-73, using CTP and ATP as substrates and producing inorganic pyrophosphate. tRNA 3'-terminal CCA addition is required both for tRNA processing and repair. Also involved in tRNA surveillance by mediating tandem CCA addition to generate a CCACCA at the 3' terminus of unstable tRNAs. While stable tRNAs receive only 3'-terminal CCA, unstable tRNAs are marked with CCACCA and rapidly degraded. This chain is Multifunctional CCA protein, found in Ralstonia nicotianae (strain ATCC BAA-1114 / GMI1000) (Ralstonia solanacearum).